Reading from the N-terminus, the 321-residue chain is Sex-lethal homolog (321 aa).

RRM domains lie at 78–156 (TNLI…FARP) and 164–244 (TNLY…VAEE).

In terms of tissue distribution, expressed in gonads and somatic tissues of both sexes. In the ovary, expressed in the last egg chamber of each ovariole. Highly expressed in nurse cells with low expression found in oocytes. Highly expressed in testis with lower expression in testis sheath and vas deferentia.

It localises to the nucleus. Unknown; apparently not involved in somatic sex determination. The chain is Sex-lethal homolog (SXL) from Megaselia scalaris (Humpbacked fly).